Reading from the N-terminus, the 485-residue chain is MHYYLGIDCGGTFIKAAIFDQNGTLQSIARRNIPIISEKPGYAERDMDELWNLCAQVIQKTIRQSSILPQQIKAIGISAQGKGAFFLDKDNKPLGRAILSSDQRAYEIVQCWQKENILQKFYPITLQTLWMGHPVSILRWIKENEPSRYEQIHTILMSHDYLRFCLTEKLYCEETNISESNFYNMREGKYDIQLAKLFGITECIDKLPPIIKSNKIAGYVTSRAAEQSGLVEGIPVVGGLFDVVSTALCADLKDDQHLNVVLGTWSVVSGVTHYIDDNQTIPFVYGKYPEKNKFIIHEASPTSAGNLEWFVNQFNLPNYDDINHEIAKLKPASSSVLFAPFLYGSNAKLGMQAGFYGIQSHHTQIHLLQAIYEGVIFSLMSHLERMQVRFPNASTVRVTGGPAKSEVWMQMLADISGMRLEIPNIEETGCLGAALMAMQAESAVEISQILNIDRKIFLPDKNQYSKYQHKYHRYLKFIEALKNLD.

The protein belongs to the FGGY kinase family. As to quaternary structure, homodimer.

It catalyses the reaction L-xylulose + ATP = L-xylulose 5-phosphate + ADP + H(+). The sequence is that of Probable L-xylulose kinase (lyx) from Haemophilus influenzae (strain ATCC 51907 / DSM 11121 / KW20 / Rd).